A 401-amino-acid polypeptide reads, in one-letter code: MTRTLHLAEQLIARPSITPDDAGCLDLLAARLAPLGFVCERMDSGPARQRVSNLWAKRPVAQVPDAHDASKTAVKTIVFAGHTDVVPTGPLEQWSSNPFLPTRRDGRLYGRGASDMKTSIAAFIVALEEFLAATPEPRIALALLLTSDEEGPSVDGTRVVVEQLKARGDSIDYCIVGEPTAVEKTGDMVKNGRRGTLSGRLLVRGIQGHIAYPQLARNPIHQALPALAELAATEWDQGNEFFPPTSWQISNLHAGTGATNVIPGEMVLDFNFRFSTQSCAEGLQRHVQQLLERHGLSYELHWTLGGQPFLTTPGELLQAVEQAISAETGLSAALSTTGGTSDGRFIAHICPQVIELGPPNASVHKIDEHVLLTDIEALKNIYRRTLENLQAQALAAATMPA.

His82 provides a ligand contact to Zn(2+). Asp84 is a catalytic residue. Position 115 (Asp115) interacts with Zn(2+). The active-site Proton acceptor is Glu149. Zn(2+) contacts are provided by Glu150, Glu178, and His364.

Belongs to the peptidase M20A family. DapE subfamily. In terms of assembly, homodimer. Zn(2+) serves as cofactor. Requires Co(2+) as cofactor.

It catalyses the reaction N-succinyl-(2S,6S)-2,6-diaminopimelate + H2O = (2S,6S)-2,6-diaminopimelate + succinate. Its pathway is amino-acid biosynthesis; L-lysine biosynthesis via DAP pathway; LL-2,6-diaminopimelate from (S)-tetrahydrodipicolinate (succinylase route): step 3/3. In terms of biological role, catalyzes the hydrolysis of N-succinyl-L,L-diaminopimelic acid (SDAP), forming succinate and LL-2,6-diaminopimelate (DAP), an intermediate involved in the bacterial biosynthesis of lysine and meso-diaminopimelic acid, an essential component of bacterial cell walls. The chain is Succinyl-diaminopimelate desuccinylase from Verminephrobacter eiseniae (strain EF01-2).